Here is a 594-residue protein sequence, read N- to C-terminus: Adenine deaminase 1 (594 aa).

It belongs to the metallo-dependent hydrolases superfamily. Adenine deaminase family. It depends on Mn(2+) as a cofactor.

The catalysed reaction is adenine + H2O + H(+) = hypoxanthine + NH4(+). This Jannaschia sp. (strain CCS1) protein is Adenine deaminase 1.